We begin with the raw amino-acid sequence, 959 residues long: Translation initiation factor IF-2 (959 aa).

The segment covering 1-10 (MSDKTNDDKT) has biased composition (basic and acidic residues). A disordered region spans residues 1–374 (MSDKTNDDKT…SQMQETREKI (374 aa)). Residues 27 to 37 (EQSTVRQNFSH) are compositionally biased toward polar residues. Low complexity-rich tracts occupy residues 63–118 (AAAA…VTKP) and 128–138 (QRPGGQQAQRP). Composition is skewed to basic and acidic residues over residues 154–225 (SEMD…EAAK) and 232–241 (ARSERRDDAR). The span at 246-284 (GARPQQAGRPQGGRPQPAGRPQQGSPRPAPIIADAAPIA) shows a compositional bias: low complexity. A compositionally biased stretch (basic and acidic residues) spans 318–333 (PEVRAPKVVKGEDDRR). The tr-type G domain occupies 457-626 (SRPPVVTIMG…LLQAEMLDLK (170 aa)). The tract at residues 466–473 (GHVDHGKT) is G1. 466–473 (GHVDHGKT) lines the GTP pocket. Residues 491–495 (GITQH) are G2. Residues 512–515 (DTPG) are G3. GTP-binding positions include 512-516 (DTPGH) and 566-569 (NKID). The interval 566–569 (NKID) is G4. Residues 602–604 (SAK) are G5.

Belongs to the TRAFAC class translation factor GTPase superfamily. Classic translation factor GTPase family. IF-2 subfamily.

It localises to the cytoplasm. In terms of biological role, one of the essential components for the initiation of protein synthesis. Protects formylmethionyl-tRNA from spontaneous hydrolysis and promotes its binding to the 30S ribosomal subunits. Also involved in the hydrolysis of GTP during the formation of the 70S ribosomal complex. The protein is Translation initiation factor IF-2 of Brucella suis biovar 1 (strain 1330).